Here is a 344-residue protein sequence, read N- to C-terminus: Methionine import ATP-binding protein MetN (344 aa).

The ABC transporter domain maps to Ile2 to Ile241. Residue Gly38–Ser45 participates in ATP binding.

The protein belongs to the ABC transporter superfamily. Methionine importer (TC 3.A.1.24) family. In terms of assembly, the complex is composed of two ATP-binding proteins (MetN), two transmembrane proteins (MetI) and a solute-binding protein (MetQ).

It localises to the cell inner membrane. The catalysed reaction is L-methionine(out) + ATP + H2O = L-methionine(in) + ADP + phosphate + H(+). It catalyses the reaction D-methionine(out) + ATP + H2O = D-methionine(in) + ADP + phosphate + H(+). In terms of biological role, part of the ABC transporter complex MetNIQ involved in methionine import. Responsible for energy coupling to the transport system. This Cupriavidus necator (strain ATCC 17699 / DSM 428 / KCTC 22496 / NCIMB 10442 / H16 / Stanier 337) (Ralstonia eutropha) protein is Methionine import ATP-binding protein MetN.